The primary structure comprises 229 residues: Probable transmembrane reductase CYB561D1 (229 aa).

Residues 1–24 (MQPLEVGLVPAPAGEPRLTRWLRR) lie on the Cytoplasmic side of the membrane. One can recognise a Cytochrome b561 domain in the interval 22 to 224 (LRRGSGILAH…HQISRSYLPR (203 aa)). Residues 25 to 45 (GSGILAHLVALGFTIFLTALS) traverse the membrane as a helical segment. At 46–53 (RPGTSLFS) the chain is on the lumenal side. Residues 54–74 (WHPVFMALAFCLCMAEAILLF) form a helical membrane-spanning segment. His55 is a heme b binding site. At 75–91 (SPEHSLFFFCSRKARIR) the chain is on the cytoplasmic side. Residues 92–112 (LHWAGQTLAILCAALGLGFII) traverse the membrane as a helical segment. Heme b contacts are provided by His93 and His127. Residues 113 to 128 (SSRTRSELPHLVSWHS) lie on the Lumenal side of the membrane. A helical membrane pass occupies residues 129–149 (WVGALTLLATAVQALCGLCLL). Over 150 to 169 (CPRAARVSRVARLKLYHLTC) the chain is Cytoplasmic. Position 166 (His166) interacts with heme b. A helical transmembrane segment spans residues 170-190 (GLVVYLMATVTVLLGMYSVWF). Residues 191–193 (QAQ) are Lumenal-facing. A helical transmembrane segment spans residues 194-214 (IKGAAWYLCLALPVYPALVIM). The Cytoplasmic segment spans residues 215–229 (HQISRSYLPRKKMEM).

Heme b is required as a cofactor.

The protein resides in the membrane. It carries out the reaction monodehydro-L-ascorbate radical(out) + L-ascorbate(in) = monodehydro-L-ascorbate radical(in) + L-ascorbate(out). The catalysed reaction is Fe(3+)(out) + L-ascorbate(in) = monodehydro-L-ascorbate radical(in) + Fe(2+)(out) + H(+). Its function is as follows. Probable transmembrane reductase that may use ascorbate as an electron donor and transfer electrons across membranes to reduce monodehydro-L-ascorbate radical and iron cations Fe(3+) in another cellular compartment. This Homo sapiens (Human) protein is Probable transmembrane reductase CYB561D1.